Here is a 300-residue protein sequence, read N- to C-terminus: Cholesterol 25-hydroxylase-like protein (300 aa).

Asparagine 9 is a glycosylation site (N-linked (GlcNAc...) asparagine). 3 consecutive transmembrane segments (helical) span residues leucine 43–isoleucine 63, leucine 95–valine 115, and methionine 130–asparagine 152. The Fatty acid hydroxylase domain occupies alanine 135 to glycine 266. The Histidine box-1 motif lies at phenylalanine 148–asparagine 152. Residues histidine 163–histidine 167 carry the Histidine box-2 motif. The chain crosses the membrane as a helical span at residues leucine 180–proline 200. The Histidine box-3 signature appears at alanine 242–leucine 248.

Belongs to the sterol desaturase family. It depends on Fe cation as a cofactor.

The protein resides in the membrane. Functionally, probable sterol desaturase. This is Cholesterol 25-hydroxylase-like protein from Caenorhabditis briggsae.